Reading from the N-terminus, the 351-residue chain is Putative phospho-N-acetylmuramoyl-pentapeptide-transferase (351 aa).

A run of 10 helical transmembrane segments spans residues 2–22 (MEFL…TLFI), 44–64 (AGTP…VTVL), 71–91 (LVLT…DDLL), 158–178 (GEKI…GAVG), 181–201 (GGFY…VGAI), 212–232 (GMAA…LGLS), 235–255 (ALPF…NRHP), 258–278 (IFMG…AVML), 281–301 (TVYF…VSLL), and 328–348 (IVLL…YMTG).

Belongs to the glycosyltransferase 4 family. MraY subfamily. Requires Mg(2+) as cofactor.

The protein resides in the cell membrane. It carries out the reaction UDP-N-acetyl-alpha-D-muramoyl-L-alanyl-gamma-D-glutamyl-meso-2,6-diaminopimeloyl-D-alanyl-D-alanine + di-trans,octa-cis-undecaprenyl phosphate = di-trans,octa-cis-undecaprenyl diphospho-N-acetyl-alpha-D-muramoyl-L-alanyl-D-glutamyl-meso-2,6-diaminopimeloyl-D-alanyl-D-alanine + UMP. The polypeptide is Putative phospho-N-acetylmuramoyl-pentapeptide-transferase (Methanothermobacter thermautotrophicus (strain ATCC 29096 / DSM 1053 / JCM 10044 / NBRC 100330 / Delta H) (Methanobacterium thermoautotrophicum)).